The chain runs to 937 residues: Translation initiation factor IF-2 (937 aa).

Disordered stretches follow at residues 61 to 156 (IQAN…KAKQ) and 171 to 274 (LTQS…SHKI). The span at 179–196 (AKKEISEVKKQEQEIKRH) shows a compositional bias: basic and acidic residues. Basic residues predominate over residues 197–208 (ENIKRRTGFRVI). The span at 237–252 (EDIKKEWQEKDKQEAK) shows a compositional bias: basic and acidic residues. Residues 436 to 605 (ERPPVVTIMG…LIQADIMELK (170 aa)) form the tr-type G domain. Residues 445–452 (GHVDHGKT) form a G1 region. 445–452 (GHVDHGKT) lines the GTP pocket. The tract at residues 470-474 (GITQH) is G2. The segment at 491–494 (DTPG) is G3. GTP contacts are provided by residues 491–495 (DTPGH) and 545–548 (NKMD). Positions 545-548 (NKMD) are G4. Positions 581 to 583 (SAK) are G5.

The protein belongs to the TRAFAC class translation factor GTPase superfamily. Classic translation factor GTPase family. IF-2 subfamily.

It is found in the cytoplasm. One of the essential components for the initiation of protein synthesis. Protects formylmethionyl-tRNA from spontaneous hydrolysis and promotes its binding to the 30S ribosomal subunits. Also involved in the hydrolysis of GTP during the formation of the 70S ribosomal complex. In Helicobacter pylori (strain G27), this protein is Translation initiation factor IF-2.